The sequence spans 356 residues: UDP-3-O-acylglucosamine N-acyltransferase (356 aa).

The active-site Proton acceptor is His-242.

The protein belongs to the transferase hexapeptide repeat family. LpxD subfamily. As to quaternary structure, homotrimer.

The catalysed reaction is a UDP-3-O-[(3R)-3-hydroxyacyl]-alpha-D-glucosamine + a (3R)-hydroxyacyl-[ACP] = a UDP-2-N,3-O-bis[(3R)-3-hydroxyacyl]-alpha-D-glucosamine + holo-[ACP] + H(+). The protein operates within bacterial outer membrane biogenesis; LPS lipid A biosynthesis. In terms of biological role, catalyzes the N-acylation of UDP-3-O-acylglucosamine using 3-hydroxyacyl-ACP as the acyl donor. Is involved in the biosynthesis of lipid A, a phosphorylated glycolipid that anchors the lipopolysaccharide to the outer membrane of the cell. The polypeptide is UDP-3-O-acylglucosamine N-acyltransferase (Acinetobacter baumannii (strain AB307-0294)).